The chain runs to 504 residues: Anaerobic nitric oxide reductase transcription regulator NorR (504 aa).

Residue Asp-57 is modified to 4-aspartylphosphate. Residues 187–416 (MIGLSPGMTQ…LEHAIHRAVV (230 aa)) enclose the Sigma-54 factor interaction domain. ATP is bound by residues 215–222 (GETGTGKE) and 278–287 (ADNGTLFLDE). The H-T-H motif DNA-binding region spans 479 to 498 (WAACARMLETDVANLHRLAK).

Its pathway is nitrogen metabolism; nitric oxide reduction. Required for the expression of anaerobic nitric oxide (NO) reductase, acts as a transcriptional activator for at least the norVW operon. Activation also requires sigma-54. This chain is Anaerobic nitric oxide reductase transcription regulator NorR, found in Escherichia coli O17:K52:H18 (strain UMN026 / ExPEC).